We begin with the raw amino-acid sequence, 572 residues long: Dihydroxy-acid dehydratase (572 aa).

Residue cysteine 54 participates in [2Fe-2S] cluster binding. Residue aspartate 86 coordinates Mg(2+). A [2Fe-2S] cluster-binding site is contributed by cysteine 127. 2 residues coordinate Mg(2+): aspartate 128 and lysine 129. The residue at position 129 (lysine 129) is an N6-carboxylysine. Cysteine 199 is a [2Fe-2S] cluster binding site. Glutamate 449 is a binding site for Mg(2+). Serine 475 (proton acceptor) is an active-site residue.

This sequence belongs to the IlvD/Edd family. Homodimer. It depends on [2Fe-2S] cluster as a cofactor. The cofactor is Mg(2+).

It catalyses the reaction (2R)-2,3-dihydroxy-3-methylbutanoate = 3-methyl-2-oxobutanoate + H2O. The catalysed reaction is (2R,3R)-2,3-dihydroxy-3-methylpentanoate = (S)-3-methyl-2-oxopentanoate + H2O. It participates in amino-acid biosynthesis; L-isoleucine biosynthesis; L-isoleucine from 2-oxobutanoate: step 3/4. It functions in the pathway amino-acid biosynthesis; L-valine biosynthesis; L-valine from pyruvate: step 3/4. Its function is as follows. Functions in the biosynthesis of branched-chain amino acids. Catalyzes the dehydration of (2R,3R)-2,3-dihydroxy-3-methylpentanoate (2,3-dihydroxy-3-methylvalerate) into 2-oxo-3-methylpentanoate (2-oxo-3-methylvalerate) and of (2R)-2,3-dihydroxy-3-methylbutanoate (2,3-dihydroxyisovalerate) into 2-oxo-3-methylbutanoate (2-oxoisovalerate), the penultimate precursor to L-isoleucine and L-valine, respectively. The polypeptide is Dihydroxy-acid dehydratase (Pelagibacter ubique (strain HTCC1062)).